The sequence spans 322 residues: Short-chain dehydrogenase TIC 32, chloroplastic (322 aa).

NADP(+) is bound by residues 36-42, 88-89, N115, and T136; these read GASSGIG and DL. S170 is a substrate binding site. Y192 acts as the Proton acceptor in catalysis. The interval 298–314 is interaction with calmodulin; sequence DTELAKKVWDFSTKLTD.

The protein belongs to the short-chain dehydrogenases/reductases (SDR) family. In terms of assembly, part of the Tic complex. Interacts with TIC110. In terms of tissue distribution, expressed in leaves and roots.

The protein localises to the plastid. The protein resides in the chloroplast inner membrane. Functionally, involved in protein precursor import into chloroplasts. Part of the redox regulon consisting of TIC32, TIC 55 and TIC62. The protein is Short-chain dehydrogenase TIC 32, chloroplastic of Arabidopsis thaliana (Mouse-ear cress).